Here is a 152-residue protein sequence, read N- to C-terminus: Aspartate carbamoyltransferase regulatory chain (152 aa).

C109, C114, C138, and C141 together coordinate Zn(2+).

The protein belongs to the PyrI family. Contains catalytic and regulatory chains. Zn(2+) is required as a cofactor.

In terms of biological role, involved in allosteric regulation of aspartate carbamoyltransferase. This is Aspartate carbamoyltransferase regulatory chain from Proteus mirabilis (strain HI4320).